The chain runs to 336 residues: MFENMMDLGSLRHGDELIKRGFAKMTKGGVIMDVTTAEQARIAEKAGAVAVMALERVPADIRANGGVARMADPLKIKEIIDAVSIPVMAKVRIGHISEAYVLESLGVDMLDESEVLTPADPFFHINKKIYKVPVVCGARTFPEAVRRIFEGAAMIRTKGEAGTGNIIEAMRHIRKVNDGINVLLRLNESDMKKVAENIASSYFILRKETSKELFGYDNFPDMDDLYYGMDSDKIINGILKTLKEIKKYRRLPVVNFAAGGVATPSDAALMMKMGLDGVFVGSGIFKSKDPARMASAIVEAAENYEDYKTIADVSSGLQGMEGLEIDNIERLQERGW.

Aspartate 33 provides a ligand contact to D-ribose 5-phosphate. Lysine 90 acts as the Schiff-base intermediate with D-ribose 5-phosphate in catalysis. Glycine 162 provides a ligand contact to D-ribose 5-phosphate. Arginine 174 contributes to the D-glyceraldehyde 3-phosphate binding site. D-ribose 5-phosphate-binding positions include glycine 260 and glycine 281–serine 282.

This sequence belongs to the PdxS/SNZ family. In the presence of PdxT, forms a dodecamer of heterodimers.

It catalyses the reaction aldehydo-D-ribose 5-phosphate + D-glyceraldehyde 3-phosphate + L-glutamine = pyridoxal 5'-phosphate + L-glutamate + phosphate + 3 H2O + H(+). The protein operates within cofactor biosynthesis; pyridoxal 5'-phosphate biosynthesis. Its function is as follows. Catalyzes the formation of pyridoxal 5'-phosphate from ribose 5-phosphate (RBP), glyceraldehyde 3-phosphate (G3P) and ammonia. The ammonia is provided by the PdxT subunit. Can also use ribulose 5-phosphate and dihydroxyacetone phosphate as substrates, resulting from enzyme-catalyzed isomerization of RBP and G3P, respectively. The chain is Pyridoxal 5'-phosphate synthase subunit PdxS from Picrophilus torridus (strain ATCC 700027 / DSM 9790 / JCM 10055 / NBRC 100828 / KAW 2/3).